The following is a 621-amino-acid chain: uncharacterized protein (621 aa).

3 consecutive transmembrane segments (helical) span residues 240–260, 548–568, and 587–607; these read FFDAFFVILLLICHLNNNLLW, LGIVTAVVFGIIEFFNCVWTV, and VIIGIGTILVLTLLITILTFM.

It localises to the cell membrane. This is an uncharacterized protein from Mycoplasma pneumoniae (strain ATCC 29342 / M129 / Subtype 1) (Mycoplasmoides pneumoniae).